A 184-amino-acid polypeptide reads, in one-letter code: ATP synthase subunit b, chloroplastic (184 aa).

Residues 27–49 (LATNPINLSVVLGVLIFFGKGVL) traverse the membrane as a helical segment.

This sequence belongs to the ATPase B chain family. As to quaternary structure, F-type ATPases have 2 components, F(1) - the catalytic core - and F(0) - the membrane proton channel. F(1) has five subunits: alpha(3), beta(3), gamma(1), delta(1), epsilon(1). F(0) has four main subunits: a(1), b(1), b'(1) and c(10-14). The alpha and beta chains form an alternating ring which encloses part of the gamma chain. F(1) is attached to F(0) by a central stalk formed by the gamma and epsilon chains, while a peripheral stalk is formed by the delta, b and b' chains.

It localises to the plastid. Its subcellular location is the chloroplast thylakoid membrane. Functionally, f(1)F(0) ATP synthase produces ATP from ADP in the presence of a proton or sodium gradient. F-type ATPases consist of two structural domains, F(1) containing the extramembraneous catalytic core and F(0) containing the membrane proton channel, linked together by a central stalk and a peripheral stalk. During catalysis, ATP synthesis in the catalytic domain of F(1) is coupled via a rotary mechanism of the central stalk subunits to proton translocation. Its function is as follows. Component of the F(0) channel, it forms part of the peripheral stalk, linking F(1) to F(0). This chain is ATP synthase subunit b, chloroplastic, found in Oenothera argillicola (Appalachian evening primrose).